Here is a 418-residue protein sequence, read N- to C-terminus: Methionine aminopeptidase 2 (418 aa).

A disordered region spans residues 18–49; it reads VSEPAAVDDSEVTEDATVQDKKKKKKKKKKKG. A compositionally biased stretch (basic residues) spans 38–49; it reads KKKKKKKKKKKG. H172 contacts substrate. A divalent metal cation contacts are provided by D192, D203, and H272. A substrate-binding site is contributed by H280. Positions 305 and 399 each coordinate a divalent metal cation.

Belongs to the peptidase M24A family. Methionine aminopeptidase eukaryotic type 2 subfamily. It depends on Co(2+) as a cofactor. Requires Zn(2+) as cofactor. Mn(2+) serves as cofactor. The cofactor is Fe(2+).

The protein resides in the cytoplasm. It catalyses the reaction Release of N-terminal amino acids, preferentially methionine, from peptides and arylamides.. In terms of biological role, cotranslationally removes the N-terminal methionine from nascent proteins. The N-terminal methionine is often cleaved when the second residue in the primary sequence is small and uncharged (Met-Ala-, Cys, Gly, Pro, Ser, Thr, or Val). The sequence is that of Methionine aminopeptidase 2 from Kluyveromyces lactis (strain ATCC 8585 / CBS 2359 / DSM 70799 / NBRC 1267 / NRRL Y-1140 / WM37) (Yeast).